Here is a 559-residue protein sequence, read N- to C-terminus: Asparagine--tRNA ligase, cytoplasmic (559 aa).

Residue S72 is modified to Phosphoserine. The segment at 82-102 (HREQMKNDSREKKEAEDNLRR) is disordered. Residue K255 is modified to N6-acetyllysine. At S493 the chain carries Phosphoserine. Position 501 is an N6-acetyllysine (K501).

The protein belongs to the class-II aminoacyl-tRNA synthetase family. In terms of assembly, homodimer.

The protein localises to the cytoplasm. It catalyses the reaction tRNA(Asn) + L-asparagine + ATP = L-asparaginyl-tRNA(Asn) + AMP + diphosphate + H(+). Functionally, catalyzes the attachment of asparagine to tRNA(Asn) in a two-step reaction: asparagine is first activated by ATP to form Asn-AMP and then transferred to the acceptor end of tRNA(Asn). In addition to its essential role in protein synthesis, acts as a signaling molecule that induced migration of CCR3-expressing cells. Has an essential role in the development of the cerebral cortex, being required for proper proliferation of radial glial cells. The chain is Asparagine--tRNA ligase, cytoplasmic from Mus musculus (Mouse).